Consider the following 669-residue polypeptide: p135Gag-Myb-Ets-transforming protein (669 aa).

Residues 1–10 (NSTMRRKVEQ) show a composition bias toward basic and acidic residues. Disordered stretches follow at residues 1–27 (NSTMRRKVEQEGYLQESSKAGLPSATT) and 132–153 (TQNHTANYPGWHSTTVADNTMT). The tract at residues 90–142 (PAAAAIQRHYNDEDPEKEKRIKELELLLMSTENELKGQQALPTQNHTANYPGW) is transcriptional activation domain. The 86-residue stretch at 276–361 (ATFSGFAKEQ…EHLEILQKEE (86 aa)) folds into the PNT domain. The segment at residues 556 to 640 (GSGPIQLWQF…AGKRYVYRFV (85 aa)) is a DNA-binding region (ETS).

The protein localises to the host nucleus. In terms of biological role, DNA-binding protein that specifically recognizes the sequence 5'-YAAC[GT]G-3'. The Myb-Ets protein induces predominantly erythroblastosis in chicken and transforms avian erythroblasts and immature myelomonocytic cells in culture. It appears that the Ets domain is responsible for the effects on erythroid cells and that the Myb domain encodes the myeloid-transforming capacity. This chain is p135Gag-Myb-Ets-transforming protein (GAG), found in Avian leukemia virus E26.